A 343-amino-acid chain; its full sequence is Selenide, water dikinase (343 aa).

The active site involves Cys-15. Residues Lys-18 and 46-48 each bind ATP; that span reads NKD. Asp-49 lines the Mg(2+) pocket. Residues Asp-66, Asp-89, and 137 to 139 contribute to the ATP site; that span reads GHS. Asp-89 contacts Mg(2+). A Mg(2+)-binding site is contributed by Asp-225.

The protein belongs to the selenophosphate synthase 1 family. Class I subfamily. Homodimer. The cofactor is Mg(2+).

It carries out the reaction hydrogenselenide + ATP + H2O = selenophosphate + AMP + phosphate + 2 H(+). Synthesizes selenophosphate from selenide and ATP. In Sulfurovum sp. (strain NBC37-1), this protein is Selenide, water dikinase.